The sequence spans 488 residues: 3-octaprenyl-4-hydroxybenzoate carboxy-lyase (488 aa).

Asn-172 lines the Mn(2+) pocket. Prenylated FMN-binding positions include 175 to 177 (IYR), 189 to 191 (RWL), and 194 to 195 (RG). Glu-238 serves as a coordination point for Mn(2+). The Proton donor role is filled by Asp-287.

This sequence belongs to the UbiD family. In terms of assembly, homohexamer. The cofactor is prenylated FMN. Requires Mn(2+) as cofactor.

The protein localises to the cell membrane. It carries out the reaction a 4-hydroxy-3-(all-trans-polyprenyl)benzoate + H(+) = a 2-(all-trans-polyprenyl)phenol + CO2. It functions in the pathway cofactor biosynthesis; ubiquinone biosynthesis. Catalyzes the decarboxylation of 3-octaprenyl-4-hydroxy benzoate to 2-octaprenylphenol, an intermediate step in ubiquinone biosynthesis. The polypeptide is 3-octaprenyl-4-hydroxybenzoate carboxy-lyase (Pseudomonas paraeruginosa (strain DSM 24068 / PA7) (Pseudomonas aeruginosa (strain PA7))).